The primary structure comprises 541 residues: Transmembrane protein 87A (541 aa).

An N-terminal signal peptide occupies residues 1–26; sequence MAAASFQPLKCLLLWVFFVITPPVKA. Over 27–209 the chain is Lumenal; sequence VPEPGIWTVP…HGFISASDWP (183 aa). N-linked (GlcNAc...) asparagine glycans are attached at residues N52, N109, N148, and N189. 2 disulfide bridges follow: C65/C116 and C82/C416. The chain crosses the membrane as a helical span at residues 210–230; the sequence is LMIFYMVMCIMYILLALLWFI. The Cytoplasmic segment spans residues 231-241; that stretch reads WSACYWKDLLR. A helical transmembrane segment spans residues 242–262; sequence IQFWIAAVIFLGMLEKAVYYA. The Lumenal segment spans residues 263–293; the sequence is EYQNTDNTGVSSHGLLIFAELISSIKRTLAR. A helical membrane pass occupies residues 294–314; the sequence is LLVTIVSLGYGIIKPRLGAVM. The Cytoplasmic segment spans residues 315-316; the sequence is HR. Residues 317–337 traverse the membrane as a helical segment; it reads VVGMGVLYFVFAAVEGVMRII. At 338 to 344 the chain is on the lumenal side; the sequence is GAKEYDL. Residues 345-365 traverse the membrane as a helical segment; it reads VLLAGIPLALLDSGLCWWIFV. The Cytoplasmic portion of the chain corresponds to 366–384; the sequence is SLAQTMKTLKLRKNTVKYS. A helical transmembrane segment spans residues 385–405; that stretch reads LYRHFTNTLIFAILASIIFMI. The Lumenal portion of the chain corresponds to 406–422; it reads WRTKKFQLVDCQADWME. A helical membrane pass occupies residues 423–443; it reads LWVDDAYWRFLFFIILLVIMF. Residues 444–541 lie on the Cytoplasmic side of the membrane; the sequence is LWRPSANNQR…MTKYEMSKIE (98 aa).

It belongs to the LU7TM family. TMEM87 subfamily.

It is found in the cell membrane. It localises to the golgi apparatus membrane. Its function is as follows. Potential monoatomic ion channel gated by mechanical force, implicated in normal touch sensitivity through the generation of mechanically activated currents. However, a direct channel activity is debated and an alternative could be that it functions as a chaperone for an unidentified mechanosensitive ion channel. Could also be involved in cell mechanosensitivity regulating cell adhesion and migration. May also be involved in retrograde transport from endosomes to the trans-Golgi network (TGN). In Xenopus tropicalis (Western clawed frog), this protein is Transmembrane protein 87A.